We begin with the raw amino-acid sequence, 780 residues long: Protein phosphatase 1 regulatory subunit 21 (780 aa).

2 coiled-coil regions span residues 1–207 (MASA…LKTL) and 556–607 (ESRE…LKNT). The tract at residues 84–104 (EPRGKKNKKSGESSSQLSQEQ) is disordered. A compositionally biased stretch (low complexity) spans 95–104 (ESSSQLSQEQ). Residue Thr-652 is modified to Phosphothreonine. The stretch at 693 to 742 (YAECRALSKRLALAEKSKEALTEEMKLASQNISRLQDELTTTKRSYEDQL) forms a coiled coil. The interval 760–780 (REEIDTLKMSSKGNSKKNKSR) is disordered.

As to quaternary structure, component of the FERRY complex, composed of five subunits: TBCK, PPP1R21, FERRY3, CRYZL1 and GATAD1, with a ratio of 1:2:1:2:4 respectively. PPP1R21 serves as a binding hub connecting all five complex subunits to mediate the binding to specific mitochondrial mRNAs. Interacts with the GTP-bound form of RAB5A (via its C-terminal region); linking the mRNP complex onto trafficking endosomes for active mRNA transport. Interacts with PPP1CA.

The protein resides in the early endosome. Functionally, component of the FERRY complex (Five-subunit Endosomal Rab5 and RNA/ribosome intermediary). The FERRY complex directly interacts with mRNAs and RAB5A, and functions as a RAB5A effector involved in the localization and the distribution of specific mRNAs most likely by mediating their endosomal transport. The complex recruits mRNAs and ribosomes to early endosomes through direct mRNA-interaction. In the complex, PPP1R21 serves as a binding hub connecting all five complex subunits and mediating the binding to mRNA and early endosomes via RAB5A. Putative regulator of protein phosphatase 1 (PP1) activity. May play a role in the endosomal sorting process or in endosome maturation pathway. The protein is Protein phosphatase 1 regulatory subunit 21 (PPP1R21) of Homo sapiens (Human).